The sequence spans 182 residues: Inorganic pyrophosphatase (182 aa).

Residues lysine 30, arginine 44, and tyrosine 56 each contribute to the substrate site. Positions 66, 71, and 103 each coordinate Mg(2+). Tyrosine 142 provides a ligand contact to substrate.

This sequence belongs to the PPase family. As to quaternary structure, homohexamer. Mg(2+) is required as a cofactor.

It is found in the cytoplasm. The enzyme catalyses diphosphate + H2O = 2 phosphate + H(+). Catalyzes the hydrolysis of inorganic pyrophosphate (PPi) forming two phosphate ions. The sequence is that of Inorganic pyrophosphatase from Buchnera aphidicola subsp. Acyrthosiphon pisum (strain APS) (Acyrthosiphon pisum symbiotic bacterium).